The primary structure comprises 751 residues: WD repeat-containing protein 91 (751 aa).

The stretch at 183-205 forms a coiled coil; it reads QKIACLQEENEIMRQKLFALQAE. Positions 237–398 are disordered; the sequence is ELGSNIMSSH…GARKEEKPAQ (162 aa). Residues 238 to 267 show a composition bias toward polar residues; sequence LGSNIMSSHSNTNMNTPSQRTSGFLSSLLA. Over residues 356–373 the composition is skewed to basic and acidic residues; that stretch reads TEKKAENSDADPDLRSDT. WD repeat units lie at residues 410-449, 452-492, 517-559, 564-603, 606-645, 668-706, and 713-751; these read EHHSSIMHCRVDCSGRRVASLDVDGVIKIWSLDGIMQTKA, ISKS…NLCE, SAAA…QQLQ, PVPIAVNCTAFNHNGNLLVTGAADGFIRLFDMQQHQCALS, AHMGEVYSVDFSYDENAVYSIGEDGKFIQWDIHKSGQKVS, VQFPRGRLFAFDSEGKYMLTCSSTGGVIYKLNSDGSTLE, and GHRAPVVTVDWSTAVECGTCLTASMDGKIKLTTLLAQKS.

Belongs to the WD repeat WDR91 family.

Its subcellular location is the early endosome membrane. It localises to the late endosome membrane. Functions as a negative regulator of the PI3 kinase/PI3K activity associated with endosomal membranes. By modifying the phosphatidylinositol 3-phosphate/PtdInsP3 content of endosomal membranes may regulate endosome fusion, recycling, sorting and early to late endosome transport. The chain is WD repeat-containing protein 91 from Xenopus tropicalis (Western clawed frog).